The sequence spans 149 residues: UPF0260 protein Pmen_1776 (149 aa).

Belongs to the UPF0260 family.

The protein is UPF0260 protein Pmen_1776 of Ectopseudomonas mendocina (strain ymp) (Pseudomonas mendocina).